Consider the following 242-residue polypeptide: Dehydration-responsive element-binding protein 1J (242 aa).

Positions 20–29 are enriched in low complexity; sequence SSATTAATAT. The interval 20 to 44 is disordered; it reads SSATTAATATGPASPKRPAGRTKFQ. The segment at residues 50–109 is a DNA-binding region (AP2/ERF); that stretch reads VFRGVRRRGRAGRWVCEVRVPGSRGDRLWVGTFDTAEEAARAHDAAMLAMCGASASLNFT. A disordered region spans residues 143-184; the sequence is FQRRGSTAATATATSGDAASTAPPSSSPVLSPNDDNASSAST. Residues 148–184 show a composition bias toward low complexity; it reads STAATATATSGDAASTAPPSSSPVLSPNDDNASSAST.

This sequence belongs to the AP2/ERF transcription factor family. ERF subfamily.

It localises to the nucleus. Functionally, transcriptional activator that binds specifically to the DNA sequence 5'-[AG]CCGAC-3'. Binding to the C-repeat/DRE element mediates high salinity- and dehydration-inducible transcription. This is Dehydration-responsive element-binding protein 1J (DREB1J) from Oryza sativa subsp. indica (Rice).